The primary structure comprises 221 residues: MVGSGVGGVDKVVQPSLKWEGSLWQQGMRRVAGVDEVGRGALAGPVVAAAVILPAHLDPEALSGVRDCKQLRPPQRAHWAERIAQVALAVGIGSASAAEIDQLNIRQATLLAMQRALAQVGEVEHILLDGLPLAELGSRQTALVKGDQLSLSIAAASIVAKVWRDTLMQSWDHQYPGYGWRTNVGYGTQEHRLALQRLGPSPQHRRSFAPLRDLQAGEIGG.

One can recognise an RNase H type-2 domain in the interval 29 to 220; the sequence is RRVAGVDEVG…LRDLQAGEIG (192 aa). Residues Asp35, Glu36, and Asp129 each coordinate a divalent metal cation. Residues 198–221 are disordered; that stretch reads LGPSPQHRRSFAPLRDLQAGEIGG.

The protein belongs to the RNase HII family. The cofactor is Mn(2+). It depends on Mg(2+) as a cofactor.

It is found in the cytoplasm. It catalyses the reaction Endonucleolytic cleavage to 5'-phosphomonoester.. Its function is as follows. Endonuclease that specifically degrades the RNA of RNA-DNA hybrids. The polypeptide is Ribonuclease HII (Synechococcus sp. (strain JA-3-3Ab) (Cyanobacteria bacterium Yellowstone A-Prime)).